The sequence spans 480 residues: ATP synthase subunit beta, chloroplastic (480 aa).

161-168 (GGAGVGKT) serves as a coordination point for ATP.

The protein belongs to the ATPase alpha/beta chains family. In terms of assembly, F-type ATPases have 2 components, CF(1) - the catalytic core - and CF(0) - the membrane proton channel. CF(1) has five subunits: alpha(3), beta(3), gamma(1), delta(1), epsilon(1). CF(0) has four main subunits: a(1), b(1), b'(1) and c(9-12).

The protein localises to the plastid. The protein resides in the chloroplast thylakoid membrane. It catalyses the reaction ATP + H2O + 4 H(+)(in) = ADP + phosphate + 5 H(+)(out). Its function is as follows. Produces ATP from ADP in the presence of a proton gradient across the membrane. The catalytic sites are hosted primarily by the beta subunits. The protein is ATP synthase subunit beta, chloroplastic of Euglena gracilis.